Consider the following 130-residue polypeptide: MARQIKRSGTTKQKKNIPVGVAHIQSTFNNTIISITSPTGEVIAWASAGSSGFKGARKGTPFAAQTAAENSARQAMEQGMRQIEVIISGPGSGREMAIKALQATGLEISLIRDITPVPHNGCRPPKRRRV.

It belongs to the universal ribosomal protein uS11 family. Part of the 30S ribosomal subunit.

It is found in the plastid. Its subcellular location is the cyanelle. This chain is Small ribosomal subunit protein uS11c, found in Cyanophora paradoxa.